The following is a 414-amino-acid chain: Glucose-1-phosphate adenylyltransferase (414 aa).

Alpha-D-glucose 1-phosphate-binding positions include Y103, G168, 183–184 (EK), and S201.

It belongs to the bacterial/plant glucose-1-phosphate adenylyltransferase family. In terms of assembly, homotetramer.

The enzyme catalyses alpha-D-glucose 1-phosphate + ATP + H(+) = ADP-alpha-D-glucose + diphosphate. It participates in glycan biosynthesis; glycogen biosynthesis. Functionally, involved in the biosynthesis of ADP-glucose, a building block required for the elongation reactions to produce glycogen. Catalyzes the reaction between ATP and alpha-D-glucose 1-phosphate (G1P) to produce pyrophosphate and ADP-Glc. The chain is Glucose-1-phosphate adenylyltransferase from Thermus thermophilus (strain ATCC 27634 / DSM 579 / HB8).